We begin with the raw amino-acid sequence, 290 residues long: Putative speedy protein-like protein 3 (290 aa).

The interval 16–50 (GVDPSPPCRSLGWKRKKEWSDESEEEPEKELAPEP) is disordered. Residues 36–50 (DESEEEPEKELAPEP) are compositionally biased toward acidic residues.

This sequence belongs to the Speedy/Ringo family.

This is Putative speedy protein-like protein 3 from Homo sapiens (Human).